The chain runs to 345 residues: Probable dual-specificity RNA methyltransferase RlmN (345 aa).

E90 functions as the Proton acceptor in the catalytic mechanism. Positions 96-327 constitute a Radical SAM core domain; it reads QSYGNSVCVT…CIVRREFGHD (232 aa). Residues C103 and C332 are joined by a disulfide bond. [4Fe-4S] cluster is bound by residues C110, C114, and C117. Residues 160-161, S192, 215-217, and N291 each bind S-adenosyl-L-methionine; these read GE and SLH. C332 serves as the catalytic S-methylcysteine intermediate.

This sequence belongs to the radical SAM superfamily. RlmN family. The cofactor is [4Fe-4S] cluster.

The protein resides in the cytoplasm. The catalysed reaction is adenosine(2503) in 23S rRNA + 2 reduced [2Fe-2S]-[ferredoxin] + 2 S-adenosyl-L-methionine = 2-methyladenosine(2503) in 23S rRNA + 5'-deoxyadenosine + L-methionine + 2 oxidized [2Fe-2S]-[ferredoxin] + S-adenosyl-L-homocysteine. It carries out the reaction adenosine(37) in tRNA + 2 reduced [2Fe-2S]-[ferredoxin] + 2 S-adenosyl-L-methionine = 2-methyladenosine(37) in tRNA + 5'-deoxyadenosine + L-methionine + 2 oxidized [2Fe-2S]-[ferredoxin] + S-adenosyl-L-homocysteine. Its function is as follows. Specifically methylates position 2 of adenine 2503 in 23S rRNA and position 2 of adenine 37 in tRNAs. The sequence is that of Probable dual-specificity RNA methyltransferase RlmN from Spiroplasma citri.